A 581-amino-acid chain; its full sequence is Arginine--tRNA ligase (581 aa).

A 'HIGH' region motif is present at residues 131–141 (ANPTGPMHVGH).

Belongs to the class-I aminoacyl-tRNA synthetase family. In terms of assembly, monomer.

The protein localises to the cytoplasm. It carries out the reaction tRNA(Arg) + L-arginine + ATP = L-arginyl-tRNA(Arg) + AMP + diphosphate. The sequence is that of Arginine--tRNA ligase from Paracoccus denitrificans (strain Pd 1222).